The sequence spans 104 residues: Large ribosomal subunit protein uL24 (104 aa).

The protein belongs to the universal ribosomal protein uL24 family. In terms of assembly, part of the 50S ribosomal subunit.

Functionally, one of two assembly initiator proteins, it binds directly to the 5'-end of the 23S rRNA, where it nucleates assembly of the 50S subunit. Its function is as follows. One of the proteins that surrounds the polypeptide exit tunnel on the outside of the subunit. This Colwellia psychrerythraea (strain 34H / ATCC BAA-681) (Vibrio psychroerythus) protein is Large ribosomal subunit protein uL24.